The following is a 694-amino-acid chain: Elongation factor G 2 (694 aa).

Positions 6–282 (SKLRNIGISA…GVVDYLPDPT (277 aa)) constitute a tr-type G domain. GTP contacts are provided by residues 15–22 (AHIDSGKT), 82–86 (DTPGH), and 136–139 (NKCD).

This sequence belongs to the TRAFAC class translation factor GTPase superfamily. Classic translation factor GTPase family. EF-G/EF-2 subfamily.

The protein resides in the cytoplasm. Its function is as follows. Catalyzes the GTP-dependent ribosomal translocation step during translation elongation. During this step, the ribosome changes from the pre-translocational (PRE) to the post-translocational (POST) state as the newly formed A-site-bound peptidyl-tRNA and P-site-bound deacylated tRNA move to the P and E sites, respectively. Catalyzes the coordinated movement of the two tRNA molecules, the mRNA and conformational changes in the ribosome. This chain is Elongation factor G 2, found in Anaeromyxobacter dehalogenans (strain 2CP-C).